Here is a 335-residue protein sequence, read N- to C-terminus: Protein MET1, chloroplastic (335 aa).

A compositionally biased stretch (low complexity) spans 1-18 (MSLAPSSYPSLYSSPSLP). Disordered regions lie at residues 1-29 (MSLA…NPSL) and 66-88 (SETE…KYET). The transit peptide at 1–73 (MSLAPSSYPS…KASETESSAK (73 aa)) directs the protein to the chloroplast. A compositionally biased stretch (polar residues) spans 19 to 29 (RTQQTKQNPSL). The span at 78–88 (GDGEEEEKYET) shows a compositional bias: acidic residues. In terms of domain architecture, PDZ spans 97-136 (YGLKFRKGRDGGTYIDAILPGGSADKTGKFTVGDRVIATS). 3 TPR repeats span residues 217–250 (REKD…KPTP), 254–287 (SVAS…GYED), and 289–323 (KRIR…ESAI).

In terms of assembly, interacts directly with stromal loops of photosystem II (PSII) core components psbB (CP47) and psbC (CP43). Associates with PSII subcomplexes formed during the PSII repair cycle (e.g. PSII dimers, PSII monomers, CP43-less PSII monomerand PSII reaction centers). In terms of processing, phosphorylated rapidly (e.g. within 5 minutes) but transiently at threonine and serine residues after wounding. As to expression, expressed in leaves (at protein level). Mostly expressed in leaves, stems and siliques, and, to a lower extent, in flowers and senescent leaves, but not present in roots (at protein level).

It is found in the plastid. The protein localises to the chloroplast membrane. The protein resides in the chloroplast thylakoid membrane. Involved in photosystem II supercomplex formation and repair, probably acting as a psbB/psbC chaperone on the stromal side of the membrane. This is Protein MET1, chloroplastic from Arabidopsis thaliana (Mouse-ear cress).